A 1241-amino-acid polypeptide reads, in one-letter code: eIF-2-alpha kinase GCN2 (1241 aa).

Over residues 1–15 (MGRSSSKKKKKRGGS) the composition is skewed to basic residues. The interval 1-33 (MGRSSSKKKKKRGGSGRRGQLKDHGSNADEDNE) is disordered. The RWD domain occupies 37–148 (EEITALSAIF…EAAQEFLSEI (112 aa)). The disordered stretch occupies residues 253–321 (PIAKLNTVQE…SLGSWSSDSL (69 aa)). Low complexity-rich tracts occupy residues 267–276 (DTSISSFDSS) and 307–321 (NSES…SDSL). The Protein kinase domain maps to 425–731 (FEELKPLGQG…ATELLKHAFP (307 aa)). ATP contacts are provided by residues 431–439 (LGQGGFGHV) and Lys-454. The active-site Proton acceptor is the Asp-586. The histidyl-tRNA synthetase-like stretch occupies residues 819-1219 (IPMRLLSDCP…ELKKEKVVGR (401 aa)).

It belongs to the protein kinase superfamily. Ser/Thr protein kinase family. GCN2 subfamily. In terms of assembly, homodimer; homodimerization is important for kinase activation by uncharged tRNAs. Expressed in roots, leaves, stems, buds, flowers, siliques and seedlings.

It is found in the cytoplasm. It catalyses the reaction L-seryl-[protein] + ATP = O-phospho-L-seryl-[protein] + ADP + H(+). It carries out the reaction L-threonyl-[protein] + ATP = O-phospho-L-threonyl-[protein] + ADP + H(+). With respect to regulation, the kinase activity is stimulated upon binding to uncharged tRNAs. Metabolic-stress sensing protein kinase that phosphorylates the alpha subunit of eukaryotic translation initiation factor 2 eIF-2-alpha in response to low amino acid availability. Plays a role as an activator of the general amino acid control pathway required for adapatation to amino acid starvation. Converts phosphorylated eIF-2-alpha either to a competitive inhibitor of translation initiation, leading to a global protein synthesis repression, and thus to a reduced overall utilization of amino acids, or to a translational initiation activation of specific mRNAs, and hence allowing reprogramming of amino acid biosynthetic gene expression to alleviate nutrient depletion. Binds uncharged tRNAs. This is eIF-2-alpha kinase GCN2 from Arabidopsis thaliana (Mouse-ear cress).